A 217-amino-acid polypeptide reads, in one-letter code: Large ribosomal subunit protein uL3 (217 aa).

Belongs to the universal ribosomal protein uL3 family. As to quaternary structure, part of the 50S ribosomal subunit. Forms a cluster with proteins L14 and L19.

In terms of biological role, one of the primary rRNA binding proteins, it binds directly near the 3'-end of the 23S rRNA, where it nucleates assembly of the 50S subunit. This chain is Large ribosomal subunit protein uL3, found in Mycobacterium marinum (strain ATCC BAA-535 / M).